Consider the following 439-residue polypeptide: Oxysterol-binding protein 6 (439 aa).

Disordered regions lie at residues 1–40 (MSAK…SGAD) and 409–439 (ESST…QTTN). Polar residues-rich tracts occupy residues 409-419 (ESSTPNLSKVD) and 429-439 (PVDNSIPQTTN).

The protein belongs to the OSBP family.

The polypeptide is Oxysterol-binding protein 6 (osbF) (Dictyostelium discoideum (Social amoeba)).